We begin with the raw amino-acid sequence, 630 residues long: Eukaryotic translation initiation factor 2-alpha kinase 1 (630 aa).

The disordered stretch occupies residues 1–40 (MQGGNSGVRKREEEGDGAGAVAAPPAIDFPAEGPDPEYDE). The SIFI-degron motif lies at 85-104 (LRSRQVFKLLCQTFIKMGLL). The Protein kinase domain maps to 167–583 (FEELAILGKG…AIQLLQSELF (417 aa)). ATP contacts are provided by residues 173 to 181 (LGKGGYGRV) and lysine 196. Residues 259–301 (DQEEDREQCGVKNDESSSSSIIFAEPTPEKEKRFGESDTENQN) form a disordered region. Threonine 285 is modified (phosphothreonine). Basic and acidic residues predominate over residues 285-294 (TPEKEKRFGE). An HRM 1 repeat occupies 410-415 (ACPYVM). Aspartate 442 functions as the Proton acceptor in the catalytic mechanism. Phosphothreonine; by autocatalysis is present on residues threonine 486 and threonine 488. Threonine 493 carries the phosphothreonine modification. The stretch at 552–557 (RCPVQA) is one HRM 2 repeat.

The protein belongs to the protein kinase superfamily. Ser/Thr protein kinase family. GCN2 subfamily. In terms of assembly, synthesized in an inactive form that binds to the N-terminal domain of CDC37. Has to be associated with a multiprotein complex containing Hsp90, CDC37 and PPP5C for maturation and activation by autophosphorylation. The phosphatase PPP5C modulates this activation. Homodimer; homodimerizes in presence of heme, forming a disulfide-linked inactive homodimer. Interacts with DELE1; binds both to full-length DELE1 and processed form of DELE1 (S-DELE1) in response to stress, leading to activate its protein kinase activity and trigger the integrated stress response (ISR). Activated by autophosphorylation; phosphorylated predominantly on serine and threonine residues, but also on tyrosine residues. Autophosphorylation at Thr-488 is required for kinase activation. The active autophosphorylated form apparently is largely refractory to cellular heme fluctuations. In terms of processing, ubiquitinated and degraded by the SIFI complex once the mitochondrial stress has been resolved, thereby providing stress response silencing. Within the SIFI complex, UBR4 initiates ubiquitin chain that are further elongated or branched by KCMF1.

It catalyses the reaction L-seryl-[protein] + ATP = O-phospho-L-seryl-[protein] + ADP + H(+). The enzyme catalyses L-threonyl-[protein] + ATP = O-phospho-L-threonyl-[protein] + ADP + H(+). In normal conditions, the protein kinase activity is inhibited; inhibition is relieved by various stress conditions. Inhibited by heme: in presence of heme, forms a disulfide-linked inactive homodimer. Heme depletion relieves inhibition and stimulates kinase activity by autophosphorylation. Inhibited by the heme metabolites biliverdin and bilirubin. Induced by oxidative stress generated by arsenite treatment. Binding of nitric oxide (NO) to the heme iron in the N-terminal heme-binding domain activates the kinase activity, while binding of carbon monoxide (CO) suppresses kinase activity. Protein kinase activity is also activated upon binding to DELE1 in response to various stress, triggering the integrated stress response (ISR): activated by full-length DELE1 in response to iron deficiency, while it is activated by the processed form of DELE1 (S-DELE1) in response to mitochondrial stress. Functionally, metabolic-stress sensing protein kinase that phosphorylates the alpha subunit of eukaryotic translation initiation factor 2 (EIF2S1/eIF-2-alpha) in response to various stress conditions. Key activator of the integrated stress response (ISR) required for adaptation to various stress, such as heme deficiency, oxidative stress, osmotic shock, mitochondrial dysfunction and heat shock. EIF2S1/eIF-2-alpha phosphorylation in response to stress converts EIF2S1/eIF-2-alpha in a global protein synthesis inhibitor, leading to a global attenuation of cap-dependent translation, while concomitantly initiating the preferential translation of ISR-specific mRNAs, such as the transcriptional activator ATF4, and hence allowing ATF4-mediated reprogramming. Acts as a key sensor of heme-deficiency: in normal conditions, binds hemin via a cysteine thiolate and histidine nitrogenous coordination, leading to inhibit the protein kinase activity. This binding occurs with moderate affinity, allowing it to sense the heme concentration within the cell: heme depletion relieves inhibition and stimulates kinase activity, activating the ISR. Thanks to this unique heme-sensing capacity, plays a crucial role to shut off protein synthesis during acute heme-deficient conditions. In red blood cells (RBCs), controls hemoglobin synthesis ensuring a coordinated regulation of the synthesis of its heme and globin moieties. It thereby plays an essential protective role for RBC survival in anemias of iron deficiency. Iron deficiency also triggers activation by full-length DELE1. Also activates the ISR in response to mitochondrial dysfunction: HRI/EIF2AK1 protein kinase activity is activated upon binding to the processed form of DELE1 (S-DELE1), thereby promoting the ATF4-mediated reprogramming. Also acts as an activator of mitophagy in response to mitochondrial damage: catalyzes phosphorylation of eIF-2-alpha (EIF2S1) following activation by S-DELE1, thereby promoting mitochondrial localization of EIF2S1, triggering PRKN-independent mitophagy. The chain is Eukaryotic translation initiation factor 2-alpha kinase 1 from Homo sapiens (Human).